We begin with the raw amino-acid sequence, 216 residues long: MKVSVPGMPVTLLNMSKNDIYKMVSGDKMDVKMNIFQRLWETLRHLFWSDKQTEAYKLLFNFVNNQTGNINASEYFTGAINENEREKFINSLELFNKLKTCAKNPDELVAKGNMRWVAQTFGDIELSVTFFIEKNKICTQTLQLHKGQGNLGVDLRKAYLPGVDMRDCYLGKKTMKGSNDILYERPGWNANLGVLPRTVLPRTVLTRTVLTWTVLP.

The protein is Protein YabP (yabP) of Escherichia coli (strain K12).